Consider the following 204-residue polypeptide: UPF0637 protein SAB0972c (204 aa).

It belongs to the UPF0637 family.

This is UPF0637 protein SAB0972c from Staphylococcus aureus (strain bovine RF122 / ET3-1).